Reading from the N-terminus, the 38-residue chain is Large ribosomal subunit protein bL36 (38 aa).

This sequence belongs to the bacterial ribosomal protein bL36 family.

This chain is Large ribosomal subunit protein bL36, found in Lacticaseibacillus casei (strain BL23) (Lactobacillus casei).